Here is a 445-residue protein sequence, read N- to C-terminus: Zinc finger protein 296 (445 aa).

Over residues 1–10 (MSRRKAGRVP) the composition is skewed to basic residues. A disordered region spans residues 1–20 (MSRRKAGRVPRRVDPDTDTD). A Glycyl lysine isopeptide (Lys-Gly) (interchain with G-Cter in SUMO2) cross-link involves residue Lys-31. Positions 62–88 (SRPLGAPSTCAPRMPLSSKSSDRQPWT) are disordered. 3 consecutive C2H2-type zinc fingers follow at residues 138–161 (LSCL…QWDH), 212–234 (PTCD…MRSH), and 240–262 (YSCD…KKTH). Positions 256–359 (NRHKKTHRQL…TAPRKSHGPG (104 aa)) are disordered. Polar residues predominate over residues 269–278 (SPSTSASSRG). Over residues 320 to 332 (PGSGAQGGPGFVG) the composition is skewed to gly residues. The span at 338–351 (KVERTDPVKIEKTA) shows a compositional bias: basic and acidic residues. 3 consecutive C2H2-type zinc fingers follow at residues 360–382 (GKCE…RRSH), 388–410 (YTCD…RRTH), and 418–441 (VKCP…RQKH).

The protein belongs to the krueppel C2H2-type zinc-finger protein family. Interacts with KLF4. As to expression, strongly expressed in testis and embryonic stem cells.

It localises to the nucleus. Functionally, may be a transcriptional corepressor with KLF4. This is Zinc finger protein 296 from Mus musculus (Mouse).